We begin with the raw amino-acid sequence, 149 residues long: Protegrin-1 (149 aa).

Residues 1-29 form the signal peptide; it reads METQRASLCLGRWSLWLLLLALVVPSASA. Positions 30 to 130 are excised as a propeptide; sequence QALSYREAVL…DITCNEVQGV (101 aa). The disordered stretch occupies residues 61 to 80; the sequence is DQPPKADEDPGTPKPVSFTV. Disulfide bonds link cysteine 85–cysteine 96, cysteine 107–cysteine 124, cysteine 136–cysteine 145, and cysteine 138–cysteine 143. Arginine 148 carries the arginine amide modification.

The protein belongs to the cathelicidin family.

Its subcellular location is the secreted. In terms of biological role, microbicidal activity. Active against E.coli, Listeria monocytogenes and C.albicans, in vitro. The polypeptide is Protegrin-1 (NPG1) (Sus scrofa (Pig)).